The primary structure comprises 218 residues: Phosphatidylserine decarboxylase proenzyme (218 aa).

Ser187 functions as the Schiff-base intermediate with substrate; via pyruvic acid in the catalytic mechanism. Residue Ser187 is modified to Pyruvic acid (Ser); by autocatalysis.

Belongs to the phosphatidylserine decarboxylase family. PSD-A subfamily. Heterodimer of a large membrane-associated beta subunit and a small pyruvoyl-containing alpha subunit. Requires pyruvate as cofactor. Post-translationally, is synthesized initially as an inactive proenzyme. Formation of the active enzyme involves a self-maturation process in which the active site pyruvoyl group is generated from an internal serine residue via an autocatalytic post-translational modification. Two non-identical subunits are generated from the proenzyme in this reaction, and the pyruvate is formed at the N-terminus of the alpha chain, which is derived from the carboxyl end of the proenzyme. The post-translation cleavage follows an unusual pathway, termed non-hydrolytic serinolysis, in which the side chain hydroxyl group of the serine supplies its oxygen atom to form the C-terminus of the beta chain, while the remainder of the serine residue undergoes an oxidative deamination to produce ammonia and the pyruvoyl prosthetic group on the alpha chain.

It is found in the cell membrane. It catalyses the reaction a 1,2-diacyl-sn-glycero-3-phospho-L-serine + H(+) = a 1,2-diacyl-sn-glycero-3-phosphoethanolamine + CO2. Its pathway is phospholipid metabolism; phosphatidylethanolamine biosynthesis; phosphatidylethanolamine from CDP-diacylglycerol: step 2/2. In terms of biological role, catalyzes the formation of phosphatidylethanolamine (PtdEtn) from phosphatidylserine (PtdSer). The sequence is that of Phosphatidylserine decarboxylase proenzyme from Geobacter metallireducens (strain ATCC 53774 / DSM 7210 / GS-15).